The following is a 174-amino-acid chain: Large ribosomal subunit protein uL18 (174 aa).

Belongs to the universal ribosomal protein uL18 family. In terms of assembly, part of the 50S ribosomal subunit. Contacts the 5S and 23S rRNAs.

This is one of the proteins that bind and probably mediate the attachment of the 5S RNA into the large ribosomal subunit, where it forms part of the central protuberance. The polypeptide is Large ribosomal subunit protein uL18 (Methanosarcina barkeri (strain Fusaro / DSM 804)).